We begin with the raw amino-acid sequence, 424 residues long: Otefin (424 aa).

The 30-residue stretch at 1-30 folds into the LEM domain; the sequence is MADVDDFDSLSNAELRAKMLAQGLPNIPVT. The interval 1–50 is required for binding to Med and germline stem cell maintenance; it reads MADVDDFDSLSNAELRAKMLAQGLPNIPVTDSSRKVLVKRLRASIGGQAS. The disordered stretch occupies residues 42–186; sequence RASIGGQASP…SSKRADREEN (145 aa). Phosphoserine is present on residues Ser44, Ser50, and Ser54. Position 63 is a phosphothreonine (Thr63). Residues 65–80 are compositionally biased toward low complexity; the sequence is APAPGAPSAPAAASTP. The Nuclear localization signal motif lies at 92–99; the sequence is ATKARRTI. Positions 103 to 133 are enriched in basic and acidic residues; the sequence is EAKEPVRRLPEEAIRRRPDEADRLRSEEPVA. The residue at position 152 (Ser152) is a Phosphoserine. Basic and acidic residues predominate over residues 157–170; it reads SERKVVEPLRKPET. Residues Ser192 and Ser198 each carry the phosphoserine modification. The interval 259 to 278 is disordered; that stretch reads PSVPSARAQTTSSTRSYDYA. Positions 262-274 are enriched in low complexity; the sequence is PSARAQTTSSTRS. The tract at residues 271–400 is required for binding to Med; sequence STRSYDYASN…NRWLNSLEQK (130 aa). Ser321 carries the post-translational modification Phosphoserine. Phosphothreonine is present on Thr324. Phosphoserine is present on Ser326. Phosphothreonine is present on Thr358. Ser378 and Ser385 each carry phosphoserine. The essential for nuclear membrane localization and germline stem cell maintenance stretch occupies residues 400-424; the sequence is KYHIKSKLFIVLLVLLLIGVYYIFY. The interval 406-424 is essential for nuclear membrane localization; it reads KLFIVLLVLLLIGVYYIFY.

Interacts with Med. Interacts with Lam. Interacts with aurA, alphaTub84B, gammaTub23C and gammaTub37C. Interacts with Nemp. Post-translationally, phosphorylation at Thr-63 by aurA may be required for exit from mitosis. May be phosphorylated by Cdk1 and Pka-C1. Expressed in all cell types of the germarium and testis. Expressed in nurse cells, follicle cells and oocytes.

The protein localises to the nucleus inner membrane. It localises to the nucleus. The protein resides in the nucleoplasm. It is found in the cytoplasm. Its subcellular location is the chromosome. The protein localises to the cytoskeleton. It localises to the spindle pole. The protein resides in the microtubule organizing center. It is found in the centrosome. Functionally, inner nuclear membrane protein. Involved in the attachment of membrane vesicles to chromatin during nuclear assembly, and is probably required for centrosome maturation and cell cycle progression during mitosis. Essential for differentiation of certain tissues and the maintenance of progenitor cell populations. Required for the differentiation and maintenance of male and female germline stem cells (GSCs), as well as the maintenance of somatic cells in the GSC niche. This role is likely to be independent of the BMP (Dpp) pathway that negatively regulates bam transcription during GSC differentiation. During development, plays essential and redundant functions with the other LEM domain proteins; bocks and MAN1. Also has a redundant but important role with bocks during larval development. The polypeptide is Otefin (Drosophila melanogaster (Fruit fly)).